A 324-amino-acid polypeptide reads, in one-letter code: Beta-ketoacyl-[acyl-carrier-protein] synthase III (324 aa).

Catalysis depends on residues Cys-114 and His-251. An ACP-binding region spans residues 252–256; sequence QANLR. Residue Asn-281 is part of the active site.

Belongs to the thiolase-like superfamily. FabH family. As to quaternary structure, homodimer.

It localises to the cytoplasm. It carries out the reaction malonyl-[ACP] + acetyl-CoA + H(+) = 3-oxobutanoyl-[ACP] + CO2 + CoA. Its pathway is lipid metabolism; fatty acid biosynthesis. Its function is as follows. Catalyzes the condensation reaction of fatty acid synthesis by the addition to an acyl acceptor of two carbons from malonyl-ACP. Catalyzes the first condensation reaction which initiates fatty acid synthesis and may therefore play a role in governing the total rate of fatty acid production. Possesses both acetoacetyl-ACP synthase and acetyl transacylase activities. Its substrate specificity determines the biosynthesis of branched-chain and/or straight-chain of fatty acids. The protein is Beta-ketoacyl-[acyl-carrier-protein] synthase III of Dinoroseobacter shibae (strain DSM 16493 / NCIMB 14021 / DFL 12).